The chain runs to 670 residues: Acetyl-coenzyme A synthetase (670 aa).

CoA-binding positions include 211-214 (RGGK) and Thr329. ATP-binding positions include 404–406 (GEP), 428–433 (DTYWQT), Asp519, and Arg534. Position 542 (Ser542) interacts with CoA. Arg545 lines the ATP pocket. CoA is bound at residue Arg603.

It belongs to the ATP-dependent AMP-binding enzyme family.

The enzyme catalyses acetate + ATP + CoA = acetyl-CoA + AMP + diphosphate. The chain is Acetyl-coenzyme A synthetase (facA) from Emericella nidulans (strain FGSC A4 / ATCC 38163 / CBS 112.46 / NRRL 194 / M139) (Aspergillus nidulans).